The chain runs to 115 residues: uncharacterized protein (115 aa).

This is an uncharacterized protein from Human herpesvirus 6A (strain Uganda-1102) (HHV-6 variant A).